Reading from the N-terminus, the 625-residue chain is Inactive glucose-6-phosphate 1-dehydrogenase 4, chloroplastic (625 aa).

Residues 1 to 49 (MSLSSCLLPFSQSATAPSSSVCSCHLAASFSNFPVSSRDYSFSRSGSLV) constitute a chloroplast transit peptide. Residues 160 to 167 (GATGELAR) and Arg194 each bind NADP(+). Cys212 and Cys220 are disulfide-bonded. An NADP(+)-binding site is contributed by Lys297. D-glucose 6-phosphate-binding positions include Lys297, 327 to 331 (HMLGR), Glu365, and Asp382. Catalysis depends on His387, which acts as the Proton acceptor. Positions 471, 480, 513, and 606 each coordinate NADP(+).

This sequence belongs to the glucose-6-phosphate dehydrogenase family. Forms homodimer. Interacts with G6PD1. As to expression, expressed in leaves, stems and buds.

It localises to the plastid. The protein resides in the chloroplast stroma. In terms of biological role, seems to be a catalytically inactive enzyme. The chain is Inactive glucose-6-phosphate 1-dehydrogenase 4, chloroplastic from Arabidopsis thaliana (Mouse-ear cress).